A 226-amino-acid polypeptide reads, in one-letter code: ATP synthase F(0) complex subunit a (226 aa).

Methionine 1 carries the N-formylmethionine modification. The next 6 membrane-spanning stretches (helical) occupy residues 9–29 (FITP…FPSL), 68–88 (WTLM…LGLL), 97–117 (QLSM…ITGF), 138–158 (IPML…ALAV), 164–184 (ITAG…LMSI), and 189–209 (ALIT…VAMI).

It belongs to the ATPase A chain family. As to quaternary structure, component of the ATP synthase complex composed at least of ATP5F1A/subunit alpha, ATP5F1B/subunit beta, ATP5MC1/subunit c (homooctomer), MT-ATP6/subunit a, MT-ATP8/subunit 8, ATP5ME/subunit e, ATP5MF/subunit f, ATP5MG/subunit g, ATP5MK/subunit k, ATP5MJ/subunit j, ATP5F1C/subunit gamma, ATP5F1D/subunit delta, ATP5F1E/subunit epsilon, ATP5PF/subunit F6, ATP5PB/subunit b, ATP5PD/subunit d, ATP5PO/subunit OSCP. ATP synthase complex consists of a soluble F(1) head domain (subunits alpha(3) and beta(3)) - the catalytic core - and a membrane F(0) domain - the membrane proton channel (subunits c, a, 8, e, f, g, k and j). These two domains are linked by a central stalk (subunits gamma, delta, and epsilon) rotating inside the F1 region and a stationary peripheral stalk (subunits F6, b, d, and OSCP). Interacts with DNAJC30; interaction is direct.

The protein localises to the mitochondrion inner membrane. It catalyses the reaction H(+)(in) = H(+)(out). Its function is as follows. Subunit a, of the mitochondrial membrane ATP synthase complex (F(1)F(0) ATP synthase or Complex V) that produces ATP from ADP in the presence of a proton gradient across the membrane which is generated by electron transport complexes of the respiratory chain. ATP synthase complex consist of a soluble F(1) head domain - the catalytic core - and a membrane F(1) domain - the membrane proton channel. These two domains are linked by a central stalk rotating inside the F(1) region and a stationary peripheral stalk. During catalysis, ATP synthesis in the catalytic domain of F(1) is coupled via a rotary mechanism of the central stalk subunits to proton translocation. With the subunit c (ATP5MC1), forms the proton-conducting channel in the F(0) domain, that contains two crucial half-channels (inlet and outlet) that facilitate proton movement from the mitochondrial intermembrane space (IMS) into the matrix. Protons are taken up via the inlet half-channel and released through the outlet half-channel, following a Grotthuss mechanism. This is ATP synthase F(0) complex subunit a from Bos taurus (Bovine).